A 569-amino-acid polypeptide reads, in one-letter code: MTTDNKFVVEGKLADNERLKGESNFLRGTIAEDLKDDLTGAFVGDNFQLIRFHGMYQQDDRDLRAERAKQKLEPLQNVMLRARLPGGIIKPQQWLAIDKFAEEKSLYGSIRLTTRQTFQFHGVLKPNIKLMHQTLNQVGIDSIATAGDVNRNVLCTSNPIESAVHQEAYEWATKISEHLLPKTRAYAEIWLDGEKKETTDHEPILGANYLPRKFKTTVAIPPLNDVDVHANDLNFIAISKDGKLVGFNVLVGGGLAMTHGDHATFPRKASDFGFIKVEDTLAIAEAVVSTQRDWGNRVNRKNAKTKYTLERVGVENFKAEVEKRSGVTFGESQAYEFTERGDRIGWVEGIDGKHHLTLFIENGRILDYPGKPLKTGCAEIAKIHDGDFRLTANQNLIVAGVSEQNKAKVEEIARAHGLIEDDLSAQRKDSMACVALPTCPLAMAEAERYLPEAVTQLEGILAKHAIAQKSIIYRVTGCPNGCGRSMLAEIGLVGKGPGKYNLHLGGNRQGTRIPKMYKENIGEQQIMDELDVLIGQWAKEAQSDESFGDFVIRTGVIAEVVNSAEDFYA.

[4Fe-4S] cluster contacts are provided by cysteine 433, cysteine 439, cysteine 478, and cysteine 482. Residue cysteine 482 coordinates siroheme.

It belongs to the nitrite and sulfite reductase 4Fe-4S domain family. Alpha(8)-beta(8). The alpha component is a flavoprotein, the beta component is a hemoprotein. Siroheme serves as cofactor. It depends on [4Fe-4S] cluster as a cofactor.

It carries out the reaction hydrogen sulfide + 3 NADP(+) + 3 H2O = sulfite + 3 NADPH + 4 H(+). The protein operates within sulfur metabolism; hydrogen sulfide biosynthesis; hydrogen sulfide from sulfite (NADPH route): step 1/1. Its function is as follows. Component of the sulfite reductase complex that catalyzes the 6-electron reduction of sulfite to sulfide. This is one of several activities required for the biosynthesis of L-cysteine from sulfate. The protein is Sulfite reductase [NADPH] hemoprotein beta-component of Pseudoalteromonas atlantica (strain T6c / ATCC BAA-1087).